The primary structure comprises 330 residues: L-lactate dehydrogenase (330 aa).

Residues V31, D52, K57, and 96 to 97 (GA) contribute to the NAD(+) site. Substrate is bound by residues Q99, R105, and 137–140 (NPVD). Residues 135 to 137 (VSN) and S160 contribute to the NAD(+) site. 165-168 (DTAR) provides a ligand contact to substrate. R170 and H185 together coordinate beta-D-fructose 1,6-bisphosphate. The active-site Proton acceptor is H192. Phosphotyrosine is present on Y238. T247 contributes to the substrate binding site.

Belongs to the LDH/MDH superfamily. LDH family. In terms of assembly, homotetramer.

It is found in the cytoplasm. The catalysed reaction is (S)-lactate + NAD(+) = pyruvate + NADH + H(+). It participates in fermentation; pyruvate fermentation to lactate; (S)-lactate from pyruvate: step 1/1. With respect to regulation, allosterically activated by fructose 1,6-bisphosphate (FBP). Functionally, catalyzes the conversion of lactate to pyruvate. This chain is L-lactate dehydrogenase, found in Gloeobacter violaceus (strain ATCC 29082 / PCC 7421).